A 292-amino-acid chain; its full sequence is Polyisoprenoid diphosphate/phosphate phosphohydrolase PLPP6 (292 aa).

Disordered stretches follow at residues 1 to 34 and 66 to 86; these read MPSPRRTIEGRPLGSSGGSSVPGSPAHGGGSGGG and GSFPLAASGPAQAAPAPPPED. The Cytoplasmic segment spans residues 1–131; the sequence is MPSPRRTIEG…SAWGSVRPLM (131 aa). Positions 10–25 are enriched in low complexity; that stretch reads GRPLGSSGGSSVPGSP. Phosphoserine occurs at positions 24 and 67. The span at 69 to 79 shows a compositional bias: low complexity; it reads PLAASGPAQAA. Residues 132-152 form a helical membrane-spanning segment; that stretch reads KLLEISGHGIPWLLGTLYCLL. Topologically, residues 153-161 are lumenal; it reads RSDSWAGRE. A helical transmembrane segment spans residues 162 to 182; it reads VLMNLLFALLLDLLLVAVIKG. Positions 181 to 189 are phosphatase sequence motif I; the sequence is KGLVRRRRP. Topologically, residues 183-225 are cytoplasmic; sequence LVRRRRPAHNQKDMFFTLSVDRYSFPSGHATRAALVSRFILNH. Residues 208–211 are phosphatase sequence motif II; it reads PSGH. H211 (proton donors) is an active-site residue. A helical transmembrane segment spans residues 226 to 246; it reads LVLAIPLRVLVVLWAFVLGLS. Residues 246–257 form a phosphatase sequence motif III region; sequence SRVMLGRHNVTD. Topologically, residues 247 to 257 are lumenal; sequence RVMLGRHNVTD. H253 (nucleophile) is an active-site residue. Residues 258–278 form a helical membrane-spanning segment; the sequence is VAFGFFLGYMQYSIVDYCWLS. Topologically, residues 279–292 are cytoplasmic; that stretch reads PHNVPVLFVLWNQQ.

It belongs to the PA-phosphatase related phosphoesterase family. Phosphorylation by PKC activates the phosphatase activity towards presqualene diphosphate.

It localises to the endoplasmic reticulum membrane. It is found in the nucleus envelope. Its subcellular location is the nucleus inner membrane. The enzyme catalyses presqualene diphosphate + H2O = presqualene phosphate + phosphate + H(+). It catalyses the reaction presqualene phosphate + H2O = presqualene alcohol + phosphate. It carries out the reaction (2E,6E)-farnesyl diphosphate + H2O = (2E,6E)-farnesyl phosphate + phosphate + H(+). The catalysed reaction is (2E,6E)-farnesyl phosphate + H2O = (2E,6E)-farnesol + phosphate. The enzyme catalyses (2E,6E,10E)-geranylgeranyl diphosphate + H2O = (2E,6E,10E)-geranylgeranyl phosphate + phosphate + H(+). It catalyses the reaction (2E,6E,10E)-geranylgeranyl phosphate + H2O = (2E,6E,10E)-geranylgeraniol + phosphate. It carries out the reaction (2E)-geranyl diphosphate + H2O = (2E)-geranyl phosphate + phosphate + H(+). The catalysed reaction is (2E)-geranyl phosphate + H2O = (2E)-geraniol + phosphate. The enzyme catalyses 1,2-dihexadecanoyl-sn-glycero-3-phosphate + H2O = 1,2-dihexadecanoyl-sn-glycerol + phosphate. Its function is as follows. Magnesium-independent polyisoprenoid diphosphatase that catalyzes the sequential dephosphorylation of presqualene, farnesyl, geranyl and geranylgeranyl diphosphates. Functions in the innate immune response through the dephosphorylation of presqualene diphosphate which acts as a potent inhibitor of the signaling pathways contributing to polymorphonuclear neutrophils activation. May regulate the biosynthesis of cholesterol and related sterols by dephosphorylating presqualene and farnesyl diphosphate, two key intermediates in this biosynthetic pathway. May also play a role in protein prenylation by acting on farnesyl diphosphate and its derivative geranylgeranyl diphosphate, two precursors for the addition of isoprenoid anchors to membrane proteins. Has a lower activity towards phosphatidic acid (PA), but through phosphatidic acid dephosphorylation may participate in the biosynthesis of phospholipids and triacylglycerols. May also act on ceramide-1-P, lysophosphatidic acid (LPA) and sphing-4-enine 1-phosphate/sphingosine-1-phosphate. The sequence is that of Polyisoprenoid diphosphate/phosphate phosphohydrolase PLPP6 from Mus musculus (Mouse).